The sequence spans 828 residues: Molybdenum cofactor sulfurase (828 aa).

Position 239 is an N6-(pyridoxal phosphate)lysine (lysine 239). The active site involves cysteine 402. Residues 638–682 form a disordered region; the sequence is TRYTRRSLHSRSSTAALRRQRPVEESSMPGSFPSDTPLSRTPEPP. The 174-residue stretch at 652–825 folds into the MOSC domain; it reads AALRRQRPVE…VMVGDVVRPW (174 aa).

This sequence belongs to the class-V pyridoxal-phosphate-dependent aminotransferase family. MOCOS subfamily. It depends on pyridoxal 5'-phosphate as a cofactor.

It catalyses the reaction Mo-molybdopterin + L-cysteine + AH2 = thio-Mo-molybdopterin + L-alanine + A + H2O. Its function is as follows. Sulfurates the molybdenum cofactor. Sulfation of molybdenum is essential for xanthine dehydrogenase (XDH) and aldehyde oxidase (ADO) enzymes in which molybdenum cofactor is liganded by 1 oxygen and 1 sulfur atom in active form. The sequence is that of Molybdenum cofactor sulfurase from Aspergillus terreus (strain NIH 2624 / FGSC A1156).